The primary structure comprises 113 residues: UPF0342 protein SZO_10960 (113 aa).

Belongs to the UPF0342 family.

The sequence is that of UPF0342 protein SZO_10960 from Streptococcus equi subsp. zooepidemicus (strain H70).